Here is a 580-residue protein sequence, read N- to C-terminus: XK-related protein 7 (580 aa).

Residues 1–22 (MAAKSDGAAAVAGPGPEGPAGA) are compositionally biased toward low complexity. The interval 1 to 28 (MAAKSDGAAAVAGPGPEGPAGADRGGAG) is disordered. The next 8 membrane-spanning stretches (helical) occupy residues 59 to 79 (WVLC…WLAA), 89 to 109 (YFGL…LLSF), 260 to 280 (LLTA…LASY), 303 to 323 (VLWH…FASV), 326 to 346 (LYFG…VIQG), 355 to 375 (WEEI…WFNV), 384 to 404 (VTLY…FWYS), and 415 to 435 (LILV…MCVY). The disordered stretch occupies residues 470–516 (TSPPRSLPRTTGAERDGAAVGGERAGTPTPPVFQVRPGLPPTPVARP).

This sequence belongs to the XK family.

Its subcellular location is the cell membrane. This chain is XK-related protein 7, found in Rattus norvegicus (Rat).